The primary structure comprises 442 residues: Lipoyl synthase, apicoplast (442 aa).

A signal peptide spans 1–23; the sequence is MRVLTPSLYIYAFFIFCVRFKCG. The disordered stretch occupies residues 104 to 154; that stretch reads LGEHQLKGKRKESATNVEKEKKEKEQQEERLPVPKVGNKMPEKKPDWFHVP. Over residues 114-135 the composition is skewed to basic and acidic residues; it reads KESATNVEKEKKEKEQQEERLP. Residues Cys177, Cys182, Cys188, Cys203, Cys207, Cys210, and Ser418 each contribute to the [4Fe-4S] cluster site. Positions 189-407 constitute a Radical SAM core domain; that stretch reads WNIGTATIML…KEEGMKMGFK (219 aa).

Belongs to the radical SAM superfamily. Lipoyl synthase family. The cofactor is [4Fe-4S] cluster.

It localises to the plastid. It is found in the apicoplast. The catalysed reaction is [[Fe-S] cluster scaffold protein carrying a second [4Fe-4S](2+) cluster] + N(6)-octanoyl-L-lysyl-[protein] + 2 oxidized [2Fe-2S]-[ferredoxin] + 2 S-adenosyl-L-methionine + 4 H(+) = [[Fe-S] cluster scaffold protein] + N(6)-[(R)-dihydrolipoyl]-L-lysyl-[protein] + 4 Fe(3+) + 2 hydrogen sulfide + 2 5'-deoxyadenosine + 2 L-methionine + 2 reduced [2Fe-2S]-[ferredoxin]. It functions in the pathway protein modification; protein lipoylation via endogenous pathway; protein N(6)-(lipoyl)lysine from octanoyl-[acyl-carrier-protein]: step 2/2. In terms of biological role, catalyzes the radical-mediated insertion of two sulfur atoms into the C-6 and C-8 positions of the octanoyl moiety bound to the lipoyl domains of lipoate-dependent enzymes, thereby converting the octanoylated domains into lipoylated derivatives. This Plasmodium knowlesi (strain H) protein is Lipoyl synthase, apicoplast.